We begin with the raw amino-acid sequence, 92 residues long: uncharacterized protein (92 aa).

This is an uncharacterized protein from Schizosaccharomyces pombe (strain 972 / ATCC 24843) (Fission yeast).